Reading from the N-terminus, the 174-residue chain is MKTLVIVIHPNLETSVVNKTWMNRLKQEKDITVHDLYGEYPNFIIDVEKEQQLLLDHERIVFQFPMYWYSSPALLKQWEDDVLTHGWAYGTGGTKLHGKELLLAISLGAQESDYQAGGEYNITISELIRPFQVTANYIGMRFLPAFTQYGTLHLSKEDVKNSAERLVDYLKAEH.

The protein belongs to the NAD(P)H dehydrogenase (quinone) family.

This is an uncharacterized protein from Bacillus subtilis (strain 168).